A 69-amino-acid polypeptide reads, in one-letter code: DNA-directed RNA polymerase subunit omega (69 aa).

It belongs to the RNA polymerase subunit omega family. The RNAP catalytic core consists of 2 alpha, 1 beta, 1 beta' and 1 omega subunit. When a sigma factor is associated with the core the holoenzyme is formed, which can initiate transcription.

The enzyme catalyses RNA(n) + a ribonucleoside 5'-triphosphate = RNA(n+1) + diphosphate. Promotes RNA polymerase assembly. Latches the N- and C-terminal regions of the beta' subunit thereby facilitating its interaction with the beta and alpha subunits. This chain is DNA-directed RNA polymerase subunit omega, found in Hahella chejuensis (strain KCTC 2396).